Reading from the N-terminus, the 68-residue chain is Phosphatidylinositol N-acetylglucosaminyltransferase ERI1 subunit (68 aa).

The next 2 helical transmembrane spans lie at 8-28 and 34-54; these read FLVLGFTYSVLLISLATFYWL and FLHYWCVLLLCPATLWLWALI.

As to quaternary structure, component of the phosphatidylinositol N-acetylglucosaminyltransferase (GPI-GlcNAc transferase) complex composed of at least GPI1, GPI2, GPI3, GPI15, GPI19 and ERI1. Interacts with GPI2. Interacts with GTP-bound RAS2 in an effector loop-dependent manner.

Its subcellular location is the endoplasmic reticulum membrane. It participates in glycolipid biosynthesis; glycosylphosphatidylinositol-anchor biosynthesis. Probable component of the GPI-GlcNAc transferase (GPI-GnT) complex in the endoplasmic reticulum, a complex that catalyzes transfer of GlcNAc from UDP-GlcNAc to an acceptor phosphatidylinositol, the first step in the production of GPI-anchors for cell surface proteins. Ras may inhibit the enzyme activity of the GPI-GnT complex via the association between ERI1 and RAS2. The sequence is that of Phosphatidylinositol N-acetylglucosaminyltransferase ERI1 subunit (ERI1) from Saccharomyces cerevisiae (strain ATCC 204508 / S288c) (Baker's yeast).